The chain runs to 123 residues: UPF0102 protein CLM_2733 (123 aa).

It belongs to the UPF0102 family.

The polypeptide is UPF0102 protein CLM_2733 (Clostridium botulinum (strain Kyoto / Type A2)).